The primary structure comprises 484 residues: Glutamate--tRNA ligase (484 aa).

The 'HIGH' region motif lies at 11 to 21 (PSPTGYLHIGN). Residues 252 to 256 (KLSKR) carry the 'KMSKS' region motif. K255 serves as a coordination point for ATP.

Belongs to the class-I aminoacyl-tRNA synthetase family. Glutamate--tRNA ligase type 1 subfamily. As to quaternary structure, monomer.

Its subcellular location is the cytoplasm. The catalysed reaction is tRNA(Glu) + L-glutamate + ATP = L-glutamyl-tRNA(Glu) + AMP + diphosphate. Catalyzes the attachment of glutamate to tRNA(Glu) in a two-step reaction: glutamate is first activated by ATP to form Glu-AMP and then transferred to the acceptor end of tRNA(Glu). This is Glutamate--tRNA ligase from Staphylococcus saprophyticus subsp. saprophyticus (strain ATCC 15305 / DSM 20229 / NCIMB 8711 / NCTC 7292 / S-41).